Consider the following 399-residue polypeptide: 26S proteasome regulatory subunit 10B homolog A (399 aa).

Thr2 bears the N-acetylthreonine mark. An ATP-binding site is contributed by 180 to 187 (GPPGTGKT). Lys203 participates in a covalent cross-link: Glycyl lysine isopeptide (Lys-Gly) (interchain with G-Cter in ubiquitin).

This sequence belongs to the AAA ATPase family. In terms of assembly, component of the 19S regulatory particle (RP/PA700) base subcomplex of the 26S proteasome. The 26S proteasome is composed of a core protease (CP), known as the 20S proteasome, capped at one or both ends by the 19S regulatory particle (RP/PA700). The RP/PA700 complex is composed of at least 17 different subunits in two subcomplexes, the base and the lid, which form the portions proximal and distal to the 20S proteolytic core, respectively.

It localises to the cytoplasm. The protein localises to the nucleus. Its function is as follows. The 26S proteasome is involved in the ATP-dependent degradation of ubiquitinated proteins. The regulatory (or ATPase) complex confers ATP dependency and substrate specificity to the 26S complex. This is 26S proteasome regulatory subunit 10B homolog A (RPT4A) from Arabidopsis thaliana (Mouse-ear cress).